A 416-amino-acid chain; its full sequence is Actin-like protein 9 (416 aa).

The disordered stretch occupies residues 1–40; it reads MDASRPKSSESQSSLEAPRPGPNPSPNVVNKPLQRDSPGM.

It belongs to the actin family. In terms of assembly, interacts with ACTL7A. Testis-specific.

The protein resides in the cytoplasmic vesicle. It is found in the secretory vesicle. Its subcellular location is the acrosome. It localises to the cytoplasm. The protein localises to the cytoskeleton. The protein resides in the perinuclear theca. Its function is as follows. Testis-specic protein that plays an important role in fusion of proacrosomal vesicles and perinuclear theca formation. The sequence is that of Actin-like protein 9 from Homo sapiens (Human).